The following is a 90-amino-acid chain: Small ribosomal subunit protein bS18 (90 aa).

Residues 1–24 (MKPMRQKPGRGQGNKSISNALASK) form a disordered region.

The protein belongs to the bacterial ribosomal protein bS18 family. Part of the 30S ribosomal subunit. Forms a tight heterodimer with protein bS6.

Binds as a heterodimer with protein bS6 to the central domain of the 16S rRNA, where it helps stabilize the platform of the 30S subunit. This is Small ribosomal subunit protein bS18 from Chlorobium phaeovibrioides (strain DSM 265 / 1930) (Prosthecochloris vibrioformis (strain DSM 265)).